A 393-amino-acid polypeptide reads, in one-letter code: Phosphoglycerate kinase (393 aa).

Residues 22-24 (DFN), arginine 37, 60-63 (HLGR), arginine 119, and arginine 152 contribute to the substrate site. ATP-binding positions include lysine 202, glycine 293, glutamate 324, and 350-353 (GGDS).

This sequence belongs to the phosphoglycerate kinase family. As to quaternary structure, monomer.

The protein resides in the cytoplasm. The enzyme catalyses (2R)-3-phosphoglycerate + ATP = (2R)-3-phospho-glyceroyl phosphate + ADP. It participates in carbohydrate degradation; glycolysis; pyruvate from D-glyceraldehyde 3-phosphate: step 2/5. This chain is Phosphoglycerate kinase, found in Borreliella afzelii (strain PKo) (Borrelia afzelii).